A 597-amino-acid chain; its full sequence is Cytosolic phospholipase A2 gamma (597 aa).

Residues 1–597 (MELSSGVCPA…FKKSHNISKD (597 aa)) form the PLA2c domain. The active-site Nucleophile is the serine 83. Residue aspartate 417 is the Proton acceptor of the active site. Residues 576 to 597 (RVKDPQGSQTVEFKKSHNISKD) form a disordered region. Residues 587 to 597 (EFKKSHNISKD) are compositionally biased toward basic and acidic residues.

Highly expressed in ovary, where it localizes to oocytes in preantral and antral stage follicles (at protein level). Not detected in other tissues tested.

The protein localises to the nucleus. It localises to the nucleoplasm. The protein resides in the nucleus envelope. Its subcellular location is the cytoplasm. It is found in the cell cortex. The protein localises to the cytoskeleton. It localises to the spindle. The catalysed reaction is a 1,2-diacyl-sn-glycero-3-phosphocholine + H2O = a 1-acyl-sn-glycero-3-phosphocholine + a fatty acid + H(+). The enzyme catalyses a 1-O-alkyl-2-acyl-sn-glycero-3-phosphocholine + H2O = a 1-O-alkyl-sn-glycero-3-phosphocholine + a fatty acid + H(+). It catalyses the reaction 1,2-dihexadecanoyl-sn-glycero-3-phosphocholine + H2O = 1-hexadecanoyl-sn-glycero-3-phosphocholine + hexadecanoate + H(+). It carries out the reaction 1-hexadecanoyl-2-(9Z-octadecenoyl)-sn-glycero-3-phosphocholine + H2O = 1-hexadecanoyl-sn-glycero-3-phosphocholine + (9Z)-octadecenoate + H(+). The catalysed reaction is 1-hexadecanoyl-2-(9Z,12Z-octadecadienoyl)-sn-glycero-3-phosphocholine + H2O = (9Z,12Z)-octadecadienoate + 1-hexadecanoyl-sn-glycero-3-phosphocholine + H(+). The enzyme catalyses 1-hexadecanoyl-2-(5Z,8Z,11Z,14Z-eicosatetraenoyl)-sn-glycero-3-phosphocholine + H2O = 1-hexadecanoyl-sn-glycero-3-phosphocholine + (5Z,8Z,11Z,14Z)-eicosatetraenoate + H(+). It catalyses the reaction 1-O-hexadecyl-2-(5Z,8Z,11Z,14Z)-eicosatetraenoyl-sn-glycero-3-phosphocholine + H2O = 1-O-hexadecyl-sn-glycero-3-phosphocholine + (5Z,8Z,11Z,14Z)-eicosatetraenoate + H(+). It carries out the reaction 1-hexadecanoyl-2-(5Z,8Z,11Z,14Z-eicosatetraenoyl)-sn-glycero-3-phosphocholine + H2O = 2-(5Z,8Z,11Z,14Z)-eicosatetraenoyl-sn-glycero-3-phosphocholine + hexadecanoate + H(+). The catalysed reaction is a 1-acyl-sn-glycero-3-phosphocholine + H2O = sn-glycerol 3-phosphocholine + a fatty acid + H(+). The enzyme catalyses 1-hexadecanoyl-sn-glycero-3-phosphocholine + H2O = sn-glycerol 3-phosphocholine + hexadecanoate + H(+). It catalyses the reaction 2 1-hexadecanoyl-sn-glycero-3-phosphocholine = 1,2-dihexadecanoyl-sn-glycero-3-phosphocholine + sn-glycerol 3-phosphocholine. It carries out the reaction 1-hexadecanoyl-sn-glycero-3-phosphoethanolamine + 1-hexadecanoyl-sn-glycero-3-phosphocholine = 1,2-dihexadecanoyl-sn-glycero-3-phosphoethanolamine + sn-glycerol 3-phosphocholine. The catalysed reaction is 1-hexadecanoyl-sn-glycero-3-phosphoethanolamine + 1-hexadecanoyl-sn-glycero-3-phosphocholine = sn-glycero-3-phosphoethanolamine + 1,2-dihexadecanoyl-sn-glycero-3-phosphocholine. The enzyme catalyses 2 1-hexadecanoyl-sn-glycero-3-phosphoethanolamine = 1,2-dihexadecanoyl-sn-glycero-3-phosphoethanolamine + sn-glycero-3-phosphoethanolamine. It catalyses the reaction 1-O-hexadecyl-sn-glycero-3-phosphocholine + 1-hexadecanoyl-sn-glycero-3-phosphocholine = 1-O-hexadecyl-2-hexadecanoyl-sn-glycero-3-phosphocholine + sn-glycerol 3-phosphocholine. It carries out the reaction a 1-O-(1Z-alkenyl)-sn-glycero-3-phosphoethanolamine + 1-hexadecanoyl-sn-glycero-3-phosphocholine = 1-O-(1Z)-alkenyl-2-hexadecanoyl-sn-glycero-3-phosphoethanolamine + sn-glycerol 3-phosphocholine. The catalysed reaction is 1-O-hexadecyl-sn-glycero-3-phosphocholine + 1-hexadecanoyl-sn-glycero-3-phosphoethanolamine = 1-O-hexadecyl-2-hexadecanoyl-sn-glycero-3-phosphocholine + sn-glycero-3-phosphoethanolamine. The enzyme catalyses 1-octadecanoyl-2-(5Z,8Z,11Z,14Z)-eicosatetraenoyl-sn-glycero-3-phosphoethanolamine + 1-hexadecanoyl-sn-glycero-3-phosphocholine = 1-octadecanoyl-sn-glycero-3-phosphoethanolamine + 1-hexadecanoyl-2-(5Z,8Z,11Z,14Z-eicosatetraenoyl)-sn-glycero-3-phosphocholine. It catalyses the reaction 1-octadecanoyl-2-(5Z,8Z,11Z,14Z)-eicosatetraenoyl-sn-glycero-3-phosphoethanolamine + 1-O-hexadecyl-sn-glycero-3-phosphocholine = 1-octadecanoyl-sn-glycero-3-phosphoethanolamine + 1-O-hexadecyl-2-(5Z,8Z,11Z,14Z)-eicosatetraenoyl-sn-glycero-3-phosphocholine. It carries out the reaction 1-hexadecanoyl-2-(9Z,12Z-octadecadienoyl)-sn-glycero-3-phosphocholine + a 1-O-(1Z-alkenyl)-sn-glycero-3-phosphoethanolamine = 1-O-(1Z-alkenyl)-2-(9Z,12Z-octadecadienoyl)-sn-glycero-3-phosphoethanolamine + 1-hexadecanoyl-sn-glycero-3-phosphocholine. The catalysed reaction is 1-hexadecanoyl-2-(5Z,8Z,11Z,14Z-eicosatetraenoyl)-sn-glycero-3-phosphocholine + a 1-O-(1Z-alkenyl)-sn-glycero-3-phosphoethanolamine = 1-O-(1Z)-alkenyl-2-(5Z,8Z,11Z,14Z)-eicosatetraenoyl-sn-glycero-3-phosphoethanolamine + 1-hexadecanoyl-sn-glycero-3-phosphocholine. In terms of biological role, calcium-independent phospholipase, lysophospholipase and O-acyltransferase involved in phospholipid remodeling. Preferentially hydrolyzes the ester bond of the fatty acyl group attached at sn-2 position of phospholipids with choline and ethanolamine head groups, producing lysophospholipids that are used in deacylation-reacylation cycles. Transfers the sn-1 fatty acyl from one lysophospholipid molecule to the sn-2 position of another lysophospholipid to form diacyl, alkylacyl and alkenylacyl glycerophospholipids. Cleaves ester bonds but not alkyl or alkenyl ether bonds at the sn-1 position of lysophospholipids. Catalyzes sn-2 fatty acyl transfer from phospholipids to the sn-2 position of 1-O-alkyl or 1-O-alkenyl lysophospholipids with lower efficiency. The protein is Cytosolic phospholipase A2 gamma of Mus musculus (Mouse).